The sequence spans 726 residues: Catalase-peroxidase (726 aa).

Residues 1 to 33 (MSTSDDIHNTTATGKCPFHQGGHDQSAGAGTTT) are disordered. Residues 105–226 (WHGAGTYRSI…LGATEMGLIY (122 aa)) constitute a cross-link (tryptophyl-tyrosyl-methioninium (Trp-Tyr) (with M-252)). The active-site Proton acceptor is His-106. Residues 226–252 (YVNPEGPDHSGEPLSAAAAIRATFGNM) constitute a cross-link (tryptophyl-tyrosyl-methioninium (Tyr-Met) (with W-105)). Residue His-267 coordinates heme b.

This sequence belongs to the peroxidase family. Peroxidase/catalase subfamily. Homodimer or homotetramer. It depends on heme b as a cofactor. Formation of the three residue Trp-Tyr-Met cross-link is important for the catalase, but not the peroxidase activity of the enzyme.

The enzyme catalyses H2O2 + AH2 = A + 2 H2O. The catalysed reaction is 2 H2O2 = O2 + 2 H2O. In terms of biological role, bifunctional enzyme with both catalase and broad-spectrum peroxidase activity. The polypeptide is Catalase-peroxidase (Escherichia coli (strain K12 / DH10B)).